A 433-amino-acid polypeptide reads, in one-letter code: CinA-like protein (433 aa).

The protein belongs to the CinA family.

This is CinA-like protein from Prochlorococcus marinus subsp. pastoris (strain CCMP1986 / NIES-2087 / MED4).